The chain runs to 223 residues: Phosphoribosylformylglycinamidine synthase subunit PurQ (223 aa).

The Glutamine amidotransferase type-1 domain occupies 3 to 223 (FAVLVFPGSN…MVNSWREQNV (221 aa)). Cys-85 functions as the Nucleophile in the catalytic mechanism. Catalysis depends on residues His-193 and Glu-195.

In terms of assembly, part of the FGAM synthase complex composed of 1 PurL, 1 PurQ and 2 PurS subunits.

The protein localises to the cytoplasm. The catalysed reaction is N(2)-formyl-N(1)-(5-phospho-beta-D-ribosyl)glycinamide + L-glutamine + ATP + H2O = 2-formamido-N(1)-(5-O-phospho-beta-D-ribosyl)acetamidine + L-glutamate + ADP + phosphate + H(+). It catalyses the reaction L-glutamine + H2O = L-glutamate + NH4(+). Its pathway is purine metabolism; IMP biosynthesis via de novo pathway; 5-amino-1-(5-phospho-D-ribosyl)imidazole from N(2)-formyl-N(1)-(5-phospho-D-ribosyl)glycinamide: step 1/2. Its function is as follows. Part of the phosphoribosylformylglycinamidine synthase complex involved in the purines biosynthetic pathway. Catalyzes the ATP-dependent conversion of formylglycinamide ribonucleotide (FGAR) and glutamine to yield formylglycinamidine ribonucleotide (FGAM) and glutamate. The FGAM synthase complex is composed of three subunits. PurQ produces an ammonia molecule by converting glutamine to glutamate. PurL transfers the ammonia molecule to FGAR to form FGAM in an ATP-dependent manner. PurS interacts with PurQ and PurL and is thought to assist in the transfer of the ammonia molecule from PurQ to PurL. The chain is Phosphoribosylformylglycinamidine synthase subunit PurQ from Staphylococcus haemolyticus (strain JCSC1435).